The sequence spans 147 residues: Mitochondrial import receptor subunit TOM20 homolog (147 aa).

Topologically, residues 1–3 (MVV) are mitochondrial intermembrane. The chain crosses the membrane as a helical span at residues 4–26 (VGKTSAIAAGVCGALFLGYCIYF). Residues 27–147 (DRKRRSDPNF…AQNLAEDDVE (121 aa)) lie on the Cytoplasmic side of the membrane.

It belongs to the Tom20 family. As to quaternary structure, forms part of the preprotein translocase complex of the outer mitochondrial membrane (TOM complex). Interacts with tom22.

The protein localises to the mitochondrion outer membrane. Functionally, central component of the receptor complex responsible for the recognition and translocation of cytosolically synthesized mitochondrial preproteins. Together with tom22 functions as the transit peptide receptor at the surface of the mitochondrion outer membrane and facilitates the movement of preproteins into the tom40 translocation pore. The polypeptide is Mitochondrial import receptor subunit TOM20 homolog (tomm20) (Xenopus tropicalis (Western clawed frog)).